The following is a 199-amino-acid chain: NAD(P)H dehydrogenase (quinone) (199 aa).

One can recognise a Flavodoxin-like domain in the interval 4 to 190 (VLVLYYSAYG…DAARFQGAHV (187 aa)). FMN contacts are provided by residues 10–15 (SAYGHI) and 78–80 (TRY). Tyr12 contributes to the NAD(+) binding site. Trp98 contacts substrate. Residues 113–119 (SSATQHG) and His134 contribute to the FMN site.

It belongs to the WrbA family. Requires FMN as cofactor.

It carries out the reaction a quinone + NADH + H(+) = a quinol + NAD(+). The enzyme catalyses a quinone + NADPH + H(+) = a quinol + NADP(+). This chain is NAD(P)H dehydrogenase (quinone), found in Sinorhizobium fredii (strain NBRC 101917 / NGR234).